The chain runs to 323 residues: Acetyl-coenzyme A carboxylase carboxyl transferase subunit alpha (323 aa).

Residues 40-293 enclose the CoA carboxyltransferase C-terminal domain; it reads LAEKSLQLTK…RKALAESLKT (254 aa).

The protein belongs to the AccA family. In terms of assembly, acetyl-CoA carboxylase is a heterohexamer composed of biotin carboxyl carrier protein (AccB), biotin carboxylase (AccC) and two subunits each of ACCase subunit alpha (AccA) and ACCase subunit beta (AccD).

The protein resides in the cytoplasm. It carries out the reaction N(6)-carboxybiotinyl-L-lysyl-[protein] + acetyl-CoA = N(6)-biotinyl-L-lysyl-[protein] + malonyl-CoA. The protein operates within lipid metabolism; malonyl-CoA biosynthesis; malonyl-CoA from acetyl-CoA: step 1/1. Component of the acetyl coenzyme A carboxylase (ACC) complex. First, biotin carboxylase catalyzes the carboxylation of biotin on its carrier protein (BCCP) and then the CO(2) group is transferred by the carboxyltransferase to acetyl-CoA to form malonyl-CoA. In Polynucleobacter necessarius subsp. necessarius (strain STIR1), this protein is Acetyl-coenzyme A carboxylase carboxyl transferase subunit alpha.